The chain runs to 485 residues: NADH-quinone oxidoreductase subunit N (485 aa).

14 helical membrane-spanning segments follow: residues 8-28, 35-55, 75-95, 105-125, 127-147, 159-179, 203-223, 235-255, 271-291, 297-317, 326-346, 373-393, 408-427, and 449-469; these read LIAL…MLSI, FVNA…LYFV, FYTG…YPWL, FYLL…ASHL, SLFI…GYAF, YTIL…LVYA, LLAG…LVPF, PAPV…GVLM, TVLG…AISQ, LLGY…IAVQ, VGVY…VVSL, AAVM…LGFI, WWLT…YYLR, and AFTA…VLGI.

Belongs to the complex I subunit 2 family. NDH-1 is composed of 13 different subunits. Subunits NuoA, H, J, K, L, M, N constitute the membrane sector of the complex.

The protein localises to the cell inner membrane. The catalysed reaction is a quinone + NADH + 5 H(+)(in) = a quinol + NAD(+) + 4 H(+)(out). Functionally, NDH-1 shuttles electrons from NADH, via FMN and iron-sulfur (Fe-S) centers, to quinones in the respiratory chain. The immediate electron acceptor for the enzyme in this species is believed to be ubiquinone. Couples the redox reaction to proton translocation (for every two electrons transferred, four hydrogen ions are translocated across the cytoplasmic membrane), and thus conserves the redox energy in a proton gradient. This Erwinia tasmaniensis (strain DSM 17950 / CFBP 7177 / CIP 109463 / NCPPB 4357 / Et1/99) protein is NADH-quinone oxidoreductase subunit N.